The following is a 190-amino-acid chain: CASP-like protein 1E2 (190 aa).

Residues 1 to 21 (MEHEGKNNMNGMEMEKGKREL) are disordered. At 1–28 (MEHEGKNNMNGMEMEKGKRELGSRKGVE) the chain is on the cytoplasmic side. Residues 29–49 (LTMRVLALILTMAAATVLGVA) form a helical membrane-spanning segment. Topologically, residues 50 to 83 (KQTKVVSIKLIPTLPPLDITTTAKASYLSAFVYN) are extracellular. The helical transmembrane segment at 84–104 (ISVNAIACGYTAISIAILMIS) threads the bilayer. The Cytoplasmic portion of the chain corresponds to 105-111 (RGRRSKK). The helical transmembrane segment at 112–132 (LLMVVLLGDLVMVALLFSGTG) threads the bilayer. Topologically, residues 133-163 (AASAIGLMGLHGNKHVMWKKVCGVFGKFCHR) are extracellular. Residues 164–184 (AAPSLPLTLLAAVVFMFLVVL) form a helical membrane-spanning segment. Residues 185 to 190 (DAIKLP) lie on the Cytoplasmic side of the membrane.

It belongs to the Casparian strip membrane proteins (CASP) family. In terms of assembly, homodimer and heterodimers.

It localises to the cell membrane. This is CASP-like protein 1E2 from Arabidopsis thaliana (Mouse-ear cress).